The sequence spans 355 residues: MPTISVNLTTQKYQIKIENGLATSIGREVQRVWSVRKIALVTDTIVGPLYQAQITEQLTQAGFQVTVLTIPAGESAKSLEQAMSLYEALLTANFNRSDGLIALGGGVVGDLTGFVASTYMRGLPFIQIPTSLLAQVDSSVGGKTAVDLPAGKNLVGTFYQPELVLIDPQMLETLPQRQLVTGYAEVVKIAALVGADFWNLVQQIESPTAILDKAPELIARSIAYKAQIVMADVQESGQRRLLNFGHTIGHAVESLADGELTHGEAVSIGLIAISRLFEQPTQIAAQLQTVLERVGLPVTHPLLQSPALFEKIAHDKKNQGALINIVYLKAIGQPTILQLPLTQFSAQLKMKQRSF.

NAD(+) contacts are provided by residues 106-110, 130-131, Lys143, and Lys152; these read GVVGD and TS. Zn(2+)-binding residues include Glu185, His246, and His262.

Belongs to the sugar phosphate cyclases superfamily. Dehydroquinate synthase family. Co(2+) is required as a cofactor. The cofactor is Zn(2+). Requires NAD(+) as cofactor.

Its subcellular location is the cytoplasm. It catalyses the reaction 7-phospho-2-dehydro-3-deoxy-D-arabino-heptonate = 3-dehydroquinate + phosphate. Its pathway is metabolic intermediate biosynthesis; chorismate biosynthesis; chorismate from D-erythrose 4-phosphate and phosphoenolpyruvate: step 2/7. In terms of biological role, catalyzes the conversion of 3-deoxy-D-arabino-heptulosonate 7-phosphate (DAHP) to dehydroquinate (DHQ). In Latilactobacillus sakei subsp. sakei (strain 23K) (Lactobacillus sakei subsp. sakei), this protein is 3-dehydroquinate synthase.